The chain runs to 147 residues: Hemoglobin subunit beta (147 aa).

Residues 3 to 147 (EWTDSERAII…VVSALGREYH (145 aa)) form the Globin domain. Heme b is bound by residues H64 and H93.

The protein belongs to the globin family. As to quaternary structure, heterotetramer of two alpha chains and two beta chains. Red blood cells.

Involved in oxygen transport from gills to the various peripheral tissues. The polypeptide is Hemoglobin subunit beta (hbb) (Gadus morhua (Atlantic cod)).